The following is a 475-amino-acid chain: Trigger factor (475 aa).

A PPIase FKBP-type domain is found at 165–250; that stretch reads GDRVTIDYLG…VKAVFRPDEL (86 aa). A compositionally biased stretch (basic and acidic residues) spans 439 to 466; that stretch reads EYDETDVPEEKPAKKKSAVKEKSAEKTS. Residues 439 to 475 are disordered; that stretch reads EYDETDVPEEKPAKKKSAVKEKSAEKTSAKKKAPKKA.

This sequence belongs to the FKBP-type PPIase family. Tig subfamily.

The protein resides in the cytoplasm. It catalyses the reaction [protein]-peptidylproline (omega=180) = [protein]-peptidylproline (omega=0). In terms of biological role, involved in protein export. Acts as a chaperone by maintaining the newly synthesized protein in an open conformation. Functions as a peptidyl-prolyl cis-trans isomerase. This chain is Trigger factor, found in Bartonella tribocorum (strain CIP 105476 / IBS 506).